Reading from the N-terminus, the 530-residue chain is Autoinducer-2 kinase (530 aa).

The protein belongs to the FGGY kinase family.

The protein resides in the cytoplasm. The enzyme catalyses (S)-4,5-dihydroxypentane-2,3-dione + ATP = (2S)-2-hydroxy-3,4-dioxopentyl phosphate + ADP + H(+). Functionally, catalyzes the phosphorylation of autoinducer-2 (AI-2) to phospho-AI-2, which subsequently inactivates the transcriptional regulator LsrR and leads to the transcription of the lsr operon. Phosphorylates the ring-open form of (S)-4,5-dihydroxypentane-2,3-dione (DPD), which is the precursor to all AI-2 signaling molecules, at the C5 position. In Escherichia coli (strain K12 / DH10B), this protein is Autoinducer-2 kinase.